The following is an 80-amino-acid chain: Putative defensin-like protein 15 (80 aa).

Positions 1 to 29 (MAKFASIITFIYAALVLFAAFEVPTMVEA) are cleaved as a signal peptide. Residue Gln-30 is modified to Pyrrolidone carboxylic acid. 4 disulfide bridges follow: Cys-33–Cys-80, Cys-44–Cys-65, Cys-50–Cys-74, and Cys-54–Cys-76.

This sequence belongs to the DEFL family.

The protein localises to the secreted. In terms of biological role, confers broad-spectrum resistance to pathogens. In Arabidopsis thaliana (Mouse-ear cress), this protein is Putative defensin-like protein 15 (PDF1.2B).